A 190-amino-acid chain; its full sequence is UPF0200 protein TSIB_0920 (190 aa).

7-14 lines the ATP pocket; that stretch reads GMPGSGKG.

This sequence belongs to the UPF0200 family.

In Thermococcus sibiricus (strain DSM 12597 / MM 739), this protein is UPF0200 protein TSIB_0920.